A 1202-amino-acid polypeptide reads, in one-letter code: Caffeine-induced protein 16 (1202 aa).

The PAP-associated domain maps to N1105 to K1159.

This chain is Caffeine-induced protein 16 (cid16), found in Schizosaccharomyces pombe (strain 972 / ATCC 24843) (Fission yeast).